A 962-amino-acid chain; its full sequence is Glutamate receptor 1 (962 aa).

The first 25 residues, 1-25 (MFSSFSFLNMFGVLFTVFNLTVVQP), serve as a signal peptide directing secretion. The Extracellular portion of the chain corresponds to 26–591 (YPSHIIIKSF…SVFSFMQPLS (566 aa)). N-linked (GlcNAc...) asparagine glycans are attached at residues Asn190, Asn220, Asn275, Asn333, Asn441, and Asn482. A helical membrane pass occupies residues 592–612 (TEIWMYIIFAYIGVSVVIFLV). The Cytoplasmic segment spans residues 613–668 (SRFSPYEWRVEETSRGGFTISNDFSVYNCLWFTLAAFMQQGTDILPRSISGRIASS). The helical transmembrane segment at 669–689 (AWWFFTMIIVSSYTANLAAFL) threads the bilayer. Residues 690–855 (TLEKMQAPIE…GSSASLNLSK (166 aa)) lie on the Extracellular side of the membrane. Residue Asn852 is glycosylated (N-linked (GlcNAc...) asparagine). A helical transmembrane segment spans residues 856–876 (VAGIFYILMGGMVISMLAALG). Over 877-962 (EFLYRSRIEA…PANTLYNTAV (86 aa)) the chain is Cytoplasmic.

The protein belongs to the glutamate-gated ion channel (TC 1.A.10.1) family. As to quaternary structure, interacts with sol-1. Interacts with cni-1; the interaction negatively regulates export of glr-1 from the endoplasmic reticulum to synapses. Interacts with usp-46; the interaction results in deubiquitination of glr-1. Post-translationally, ubiquitinated. Deubiquitinated by usp-46 which prevents its degradation. Glycosylated. As to expression, command interneurons of the locomotory control circuit (AIB, AVA, AVB, AVD, AVE and PVC) and motor neurons (RMD, RIM, SMD, AVG, PVQ and URY).

It is found in the postsynaptic cell membrane. It localises to the endoplasmic reticulum. The protein resides in the synapse. Its subcellular location is the cell membrane. The protein localises to the recycling endosome. It is found in the cell projection. It localises to the dendrite. The protein resides in the perikaryon. Functionally, non-NMDA (N-methyl-D-aspartate) ionotropic glutamate receptor. L-glutamate acts as an excitatory neurotransmitter at many synapses in the central nervous system. The postsynaptic actions of glutamate are mediated by a variety of receptors that are named according to their selective agonists. May contribute to a sensory discrimination between mechanical and chemical stimuli. Plays a role in controlling movement in response to environmental cues such as food availability and mechanosensory stimulation such as the nose touch response. In AIB interneurons, promotes omega turns, a movement that frequently follows backwards locomotion or 'reversals' in response to environmental cues while possibly playing an inhibitory role in alternative neurons to inhibit omega turns. The chain is Glutamate receptor 1 from Caenorhabditis elegans.